The sequence spans 689 residues: Glycine--tRNA ligase beta subunit (689 aa).

The protein belongs to the class-II aminoacyl-tRNA synthetase family. Tetramer of two alpha and two beta subunits.

The protein resides in the cytoplasm. The catalysed reaction is tRNA(Gly) + glycine + ATP = glycyl-tRNA(Gly) + AMP + diphosphate. The protein is Glycine--tRNA ligase beta subunit of Shewanella woodyi (strain ATCC 51908 / MS32).